The sequence spans 275 residues: MAGVSSESLTAALVALEAKLPFASLQLAKELFGILGTVDSSAGLRRALTDPSRSGDEKSALVKQLFGGKVSTDAAEIASGLAGSRWASARDIGDALETLAASVVIAVAENKSAVSASGITGLEALENDLFAFNHAVDSSHEVQRALSEPQASPAAKIALAEKLVPNASEEAKVLIGQAVSHPRGLKATNLVRRFAELAAKRQQRWIATVSVTRPLTESQTGRLQAGLNALYGRELKINMNVDPALIGGIRIQVGDEVVDASLLTRLGQLQRQLAG.

This sequence belongs to the ATPase delta chain family. F-type ATPases have 2 components, F(1) - the catalytic core - and F(0) - the membrane proton channel. F(1) has five subunits: alpha(3), beta(3), gamma(1), delta(1), epsilon(1). F(0) has three main subunits: a(1), b(2) and c(10-14). The alpha and beta chains form an alternating ring which encloses part of the gamma chain. F(1) is attached to F(0) by a central stalk formed by the gamma and epsilon chains, while a peripheral stalk is formed by the delta and b chains.

It is found in the cell membrane. In terms of biological role, f(1)F(0) ATP synthase produces ATP from ADP in the presence of a proton or sodium gradient. F-type ATPases consist of two structural domains, F(1) containing the extramembraneous catalytic core and F(0) containing the membrane proton channel, linked together by a central stalk and a peripheral stalk. During catalysis, ATP synthesis in the catalytic domain of F(1) is coupled via a rotary mechanism of the central stalk subunits to proton translocation. This protein is part of the stalk that links CF(0) to CF(1). It either transmits conformational changes from CF(0) to CF(1) or is implicated in proton conduction. This is ATP synthase subunit delta from Arthrobacter sp. (strain FB24).